The sequence spans 426 residues: Glutamate-1-semialdehyde 2,1-aminomutase (426 aa).

N6-(pyridoxal phosphate)lysine is present on Lys265.

This sequence belongs to the class-III pyridoxal-phosphate-dependent aminotransferase family. HemL subfamily. As to quaternary structure, homodimer. Pyridoxal 5'-phosphate is required as a cofactor.

The protein localises to the cytoplasm. The catalysed reaction is (S)-4-amino-5-oxopentanoate = 5-aminolevulinate. The protein operates within porphyrin-containing compound metabolism; protoporphyrin-IX biosynthesis; 5-aminolevulinate from L-glutamyl-tRNA(Glu): step 2/2. The protein is Glutamate-1-semialdehyde 2,1-aminomutase of Escherichia coli O7:K1 (strain IAI39 / ExPEC).